Reading from the N-terminus, the 399-residue chain is Phosphoglycerate kinase (399 aa).

Substrate contacts are provided by residues 20–22 (DFN), R35, 58–61 (HLGR), R117, and R154. Residues K204, G295, E326, and 355–358 (GGDS) each bind ATP.

It belongs to the phosphoglycerate kinase family. In terms of assembly, monomer.

The protein localises to the cytoplasm. The enzyme catalyses (2R)-3-phosphoglycerate + ATP = (2R)-3-phospho-glyceroyl phosphate + ADP. The protein operates within carbohydrate degradation; glycolysis; pyruvate from D-glyceraldehyde 3-phosphate: step 2/5. In Beutenbergia cavernae (strain ATCC BAA-8 / DSM 12333 / CCUG 43141 / JCM 11478 / NBRC 16432 / NCIMB 13614 / HKI 0122), this protein is Phosphoglycerate kinase.